Here is a 501-residue protein sequence, read N- to C-terminus: Lysine--tRNA ligase (501 aa).

2 residues coordinate Mg(2+): Glu411 and Glu418.

This sequence belongs to the class-II aminoacyl-tRNA synthetase family. As to quaternary structure, homodimer. Requires Mg(2+) as cofactor.

Its subcellular location is the cytoplasm. The enzyme catalyses tRNA(Lys) + L-lysine + ATP = L-lysyl-tRNA(Lys) + AMP + diphosphate. In Pseudomonas aeruginosa (strain ATCC 15692 / DSM 22644 / CIP 104116 / JCM 14847 / LMG 12228 / 1C / PRS 101 / PAO1), this protein is Lysine--tRNA ligase.